The chain runs to 180 residues: NADH-quinone oxidoreductase subunit I (180 aa).

4Fe-4S ferredoxin-type domains follow at residues 50 to 80 (LTRDPDGEERCVACNLCAVACPVGCISLQKA) and 90 to 119 (EFFRINFSRCIFCGLCEEACPTTAIQLTPD). Positions 60, 63, 66, 70, 99, 102, 105, and 109 each coordinate [4Fe-4S] cluster.

It belongs to the complex I 23 kDa subunit family. As to quaternary structure, NDH-1 is composed of 13 different subunits. Subunits NuoA, H, J, K, L, M, N constitute the membrane sector of the complex. [4Fe-4S] cluster serves as cofactor.

The protein resides in the cell inner membrane. The catalysed reaction is a quinone + NADH + 5 H(+)(in) = a quinol + NAD(+) + 4 H(+)(out). In terms of biological role, NDH-1 shuttles electrons from NADH, via FMN and iron-sulfur (Fe-S) centers, to quinones in the respiratory chain. The immediate electron acceptor for the enzyme in this species is believed to be ubiquinone. Couples the redox reaction to proton translocation (for every two electrons transferred, four hydrogen ions are translocated across the cytoplasmic membrane), and thus conserves the redox energy in a proton gradient. The polypeptide is NADH-quinone oxidoreductase subunit I (Yersinia pseudotuberculosis serotype O:1b (strain IP 31758)).